The following is a 113-amino-acid chain: Protein translation factor SUI1 homolog (113 aa).

It belongs to the SUI1 family.

In terms of biological role, probably involved in translation. The sequence is that of Protein translation factor SUI1 homolog from Spuriopimpinella brachycarpa (Chamnamul).